Here is a 507-residue protein sequence, read N- to C-terminus: WD-40 repeat-containing protein MSI4 (507 aa).

An N-acetylmethionine modification is found at Met-1. Positions 1–66 are disordered; sequence MESDEAAAVS…KTQQSPSVDE (66 aa). WD repeat units follow at residues 95–137, 162–202, and 217–257; these read RWGP…KPRV, IHPG…NRHA, and GHQD…TTIG. Residues 258 to 272 show a composition bias toward polar residues; that stretch reads TDSKSSGSIIKQTGE. The interval 258-282 is disordered; sequence TDSKSSGSIIKQTGEGTDKNESPTV. WD repeat units follow at residues 290 to 330, 335 to 375, 384 to 424, and 439 to 486; these read GHED…NPVT, AHDA…ANGV, GHKA…KKSD, and GHRD…YRPE. Positions 308–323 match the DWD box motif; that stretch reads FCSVGDDSCLILWDAR.

This sequence belongs to the WD repeat RBAP46/RBAP48/MSI1 family. In terms of assembly, interacts with AHL16 and HOS1. Interacts with LHP1, PDP1, PDP2 and PDP3. Component of the PRC2 (polycomb repressive complex 2) complex which regulates histone methylation on histone H3K27. As to expression, expressed in rosette leaves, cauline leaves, main stems and developing fruits. Expressed at higher levels in roots and flowers.

Its subcellular location is the nucleus. Functionally, core histone-binding subunit that may target chromatin assembly factors, chromatin remodeling factors and histone deacetylases to their histone substrates in a manner that is regulated by nucleosomal DNA. Component of the flowering autonomous pathway which positively regulates flowering by promoting transcriptional repression of the flowering repressor FLC. May promote histone deacetylation at the FLC locus leading to the formation of repressive chromatin structures. Forms a histone deacetylase complex with HDA5, HDA6 and FLD that represses FLC gene expression to control flowering time. Also negatively regulates cold-responsive genes. Acts together with PDP1 and MSI5 to regulate the function of the PRC2 complex on FLC. Required for systemic acquired resistance (SAR) toward pathogenic bacteria (e.g. Pseudomonas syringae pv tomato DC3000 (avrPto)). Together with FLD and MSI4/FVE, contributes to dehydroabietinal-dependent (DA, a diterpenoid tricyclic diterpene) activation of flowering ans SAR. In Arabidopsis thaliana (Mouse-ear cress), this protein is WD-40 repeat-containing protein MSI4.